Reading from the N-terminus, the 445-residue chain is Glycine betaine monooxygenase oxygenase subunit (445 aa).

The 108-residue stretch at 73 to 180 (WLFVGMTCEI…VTHAGGFLFV (108 aa)) folds into the Rieske domain. [2Fe-2S] cluster is bound by residues cysteine 115, histidine 117, cysteine 135, and histidine 138. Fe cation is bound by residues histidine 234 and histidine 239.

The protein belongs to the bacterial ring-hydroxylating dioxygenase alpha subunit family. Homotrimer. The system is composed of an oxygenase subunit (BmoA) and a reductase subunit (BmoB). Maximal specific activity is obtained when the ratio of BmoA to BmoB is 5:1. It depends on [2Fe-2S] cluster as a cofactor. Fe cation serves as cofactor.

It catalyses the reaction glycine betaine + NADH + O2 + H(+) = N,N-dimethylglycine + formaldehyde + NAD(+) + H2O. With respect to regulation, activity is absolutely dependent on the presence of BmoB. Glycine betaine monooxygenase activity is significantly enhanced by Fe(2+) and severely inhibited by heavy-metal ions, including Co(2+), Mn(2+), Zn(2+), Cu(2+) and Ag(+). Severely inhibited by EDTA. Functionally, involved in degradation of glycine betaine. Part of a Rieske-type oxygenase system that catalyzes the conversion of glycine betaine (GB) to dimethylglycine (DMG). This subunit is the terminal oxygenase component of the system. Is specific for GB, and does not show any activity on choline, L-carnitine, stachydrine, dimethylglycine or sarcosine. Activity is strictly dependent on NADH. The polypeptide is Glycine betaine monooxygenase oxygenase subunit (Chromohalobacter salexigens (strain ATCC BAA-138 / DSM 3043 / CIP 106854 / NCIMB 13768 / 1H11)).